We begin with the raw amino-acid sequence, 669 residues long: NADH-ubiquinone oxidoreductase chain 5 (669 aa).

Helical transmembrane passes span 3 to 23, 40 to 60, 76 to 96, 113 to 133, 136 to 156, 217 to 237, 250 to 270, 283 to 303, 319 to 339, 340 to 360, 375 to 395, 417 to 437, 461 to 481, and 619 to 639; these read LLIV…GRFL, SILS…CYLR, FLFD…SSLV, FMCY…GDNF, LFLG…FWFT, AISL…AQIG, TPVS…FMIA, LIVI…TGIL, LGYM…FHLM, NHAF…HAMS, FPLT…FPFL, NFAF…SFRL, IPMA…GYLA, and GFVY…VTFF.

It belongs to the complex I subunit 5 family. As to quaternary structure, complex I is composed of at least 49 different subunits.

It is found in the mitochondrion inner membrane. It carries out the reaction a ubiquinone + NADH + 5 H(+)(in) = a ubiquinol + NAD(+) + 4 H(+)(out). In terms of biological role, core subunit of the mitochondrial membrane respiratory chain NADH dehydrogenase (Complex I) that is believed to belong to the minimal assembly required for catalysis. Complex I functions in the transfer of electrons from NADH to the respiratory chain. The immediate electron acceptor for the enzyme is believed to be ubiquinone. This chain is NADH-ubiquinone oxidoreductase chain 5 (ND5), found in Arabidopsis thaliana (Mouse-ear cress).